The following is a 385-amino-acid chain: MADSITTIVTALGFPSIESFIGVLLLGGAIIGAIVVIATIRPILDLFPFAYPNARVRARIGRLLNEKQLSEILETESMEEFKNYLRGLPDYAKYIDRFPIEKALESQLAETYEMVSQIAPASIRDPFRANLKRWDVRNIKSLITAKAAGLSAEETVNLLVPGGEVYEIIEGLADASSVQEVVTGLEATEYAGVLEDALSGYEETGMLLPIEAALDRKFLEGLIRTVGSPSDDNTKILHTYFGTMVDISNLKIILRAKADGLSYDDISPYIVPHGYQIREWKLKDLMESEDVSGVVSGLEGTDYGQMLSEALSEYTSTGSVAVFERVLEDNLNRMARNFALKKPFGVGPMIGFLSRKEVEVKNLKVIARSKREPGFPEAMVKEMLA.

The protein belongs to the V-ATPase V0D/AC39 subunit family. Has multiple subunits with at least A(3), B(3), C, D, E, F, H, I and proteolipid K(x).

The protein localises to the cell membrane. Component of the A-type ATP synthase that produces ATP from ADP in the presence of a proton gradient across the membrane. The chain is A-type ATP synthase subunit C from Methanothermobacter thermautotrophicus (strain ATCC 29096 / DSM 1053 / JCM 10044 / NBRC 100330 / Delta H) (Methanobacterium thermoautotrophicum).